Reading from the N-terminus, the 192-residue chain is NADH-ubiquinone oxidoreductase subunit 9 (192 aa).

It belongs to the complex I 30 kDa subunit family. In terms of assembly, complex I is composed of about 30 different subunits.

The protein localises to the mitochondrion inner membrane. It catalyses the reaction a ubiquinone + NADH + 5 H(+)(in) = a ubiquinol + NAD(+) + 4 H(+)(out). Core subunit of the mitochondrial membrane respiratory chain NADH dehydrogenase (Complex I) that is believed to belong to the minimal assembly required for catalysis. Complex I functions in the transfer of electrons from NADH to the respiratory chain. The immediate electron acceptor for the enzyme is believed to be ubiquinone. This chain is NADH-ubiquinone oxidoreductase subunit 9 (NAD9), found in Prototheca wickerhamii.